The following is a 368-amino-acid chain: uncharacterized protein (368 aa).

This sequence belongs to the YCR102c/YLR460c/YNL134c family.

This is an uncharacterized protein from Saccharomyces cerevisiae (strain ATCC 204508 / S288c) (Baker's yeast).